The primary structure comprises 299 residues: MSKVLQMSTVNSLAFIHIPVLTQELIKGLDICPGGHYLDATVGGGGHSRQILETYGDVQVTAIDRDEVAIAAATTNLADYNTDRLTFWTGNFADYDPGNLKFDGIIADLGVSSPQLDSPERGFSFRLDAPLDMRMDRRQSTTAADIINSYSEIELANLFYNYGEERLSRQIAKQIVKQRPFFSTTELAEVISRSVPPKYRYGRIHPATRVFQGLRIAVNQELDSLESFLAKSPSWLKTNGIIGIISFHSLEDRIVKHQLRASPLLKVLTKKPIIPQSDEQAKNPRSRSAKLRLAQRKEQ.

S-adenosyl-L-methionine is bound by residues 45–47 (GGH), D64, F92, D108, and Q115. Residues 275–299 (PQSDEQAKNPRSRSAKLRLAQRKEQ) are disordered. A compositionally biased stretch (basic residues) spans 284-299 (PRSRSAKLRLAQRKEQ).

The protein belongs to the methyltransferase superfamily. RsmH family.

It localises to the cytoplasm. The enzyme catalyses cytidine(1402) in 16S rRNA + S-adenosyl-L-methionine = N(4)-methylcytidine(1402) in 16S rRNA + S-adenosyl-L-homocysteine + H(+). Functionally, specifically methylates the N4 position of cytidine in position 1402 (C1402) of 16S rRNA. The polypeptide is Ribosomal RNA small subunit methyltransferase H (Gloeothece citriformis (strain PCC 7424) (Cyanothece sp. (strain PCC 7424))).